A 515-amino-acid chain; its full sequence is Bifunctional purine biosynthesis protein PurH (515 aa).

Positions 1 to 145 (MTKRALISVS…KNHASVTVVV (145 aa)) constitute an MGS-like domain.

Belongs to the PurH family.

The catalysed reaction is (6R)-10-formyltetrahydrofolate + 5-amino-1-(5-phospho-beta-D-ribosyl)imidazole-4-carboxamide = 5-formamido-1-(5-phospho-D-ribosyl)imidazole-4-carboxamide + (6S)-5,6,7,8-tetrahydrofolate. The enzyme catalyses IMP + H2O = 5-formamido-1-(5-phospho-D-ribosyl)imidazole-4-carboxamide. It participates in purine metabolism; IMP biosynthesis via de novo pathway; 5-formamido-1-(5-phospho-D-ribosyl)imidazole-4-carboxamide from 5-amino-1-(5-phospho-D-ribosyl)imidazole-4-carboxamide (10-formyl THF route): step 1/1. It functions in the pathway purine metabolism; IMP biosynthesis via de novo pathway; IMP from 5-formamido-1-(5-phospho-D-ribosyl)imidazole-4-carboxamide: step 1/1. The protein is Bifunctional purine biosynthesis protein PurH of Streptococcus uberis (strain ATCC BAA-854 / 0140J).